The sequence spans 127 residues: Fumarate reductase subunit C (127 aa).

3 helical membrane-spanning segments follow: residues 30–50 (ATVL…GSLV), 67–87 (VVIA…HTFF), and 107–127 (IIVL…LIVV).

It belongs to the FrdC family. As to quaternary structure, part of an enzyme complex containing four subunits: a flavoprotein (FrdA), an iron-sulfur protein (FrdB), and two hydrophobic anchor proteins (FrdC and FrdD).

Its subcellular location is the cell inner membrane. Its function is as follows. Anchors the catalytic components of the fumarate reductase complex to the cell membrane, binds quinones. This is Fumarate reductase subunit C from Vibrio vulnificus (strain CMCP6).